Here is an 81-residue protein sequence, read N- to C-terminus: Photosystem I iron-sulfur center (81 aa).

2 consecutive 4Fe-4S ferredoxin-type domains span residues 2-31 and 39-68; these read AHSV…MIPW and IASA…VRVY. Residues cysteine 11, cysteine 14, cysteine 17, cysteine 21, cysteine 48, cysteine 51, cysteine 54, and cysteine 58 each coordinate [4Fe-4S] cluster.

In terms of assembly, the eukaryotic PSI reaction center is composed of at least 11 subunits. Requires [4Fe-4S] cluster as cofactor.

It is found in the plastid. It localises to the chloroplast thylakoid membrane. The catalysed reaction is reduced [plastocyanin] + hnu + oxidized [2Fe-2S]-[ferredoxin] = oxidized [plastocyanin] + reduced [2Fe-2S]-[ferredoxin]. In terms of biological role, apoprotein for the two 4Fe-4S centers FA and FB of photosystem I (PSI); essential for photochemical activity. FB is the terminal electron acceptor of PSI, donating electrons to ferredoxin. The C-terminus interacts with PsaA/B/D and helps assemble the protein into the PSI complex. Required for binding of PsaD and PsaE to PSI. PSI is a plastocyanin-ferredoxin oxidoreductase, converting photonic excitation into a charge separation, which transfers an electron from the donor P700 chlorophyll pair to the spectroscopically characterized acceptors A0, A1, FX, FA and FB in turn. This Adiantum capillus-veneris (Maidenhair fern) protein is Photosystem I iron-sulfur center.